Reading from the N-terminus, the 453-residue chain is V-type proton ATPase subunit B (453 aa).

Arg-341 contacts ATP.

The protein belongs to the ATPase alpha/beta chains family. As to quaternary structure, V-ATPase is a heteromultimeric enzyme made up of two complexes: the ATP-hydrolytic V1 complex and the proton translocation V0 complex. The V1 complex consists of three catalytic AB heterodimers that form a heterohexamer, three peripheral stalks each consisting of EG heterodimers, one central rotor including subunits D and F, and the regulatory subunits C and H. The proton translocation complex V0 consists of the proton transport subunit a, a ring of proteolipid subunits c9c'', rotary subunit d, subunits e and f, and two accessory subunits.

Its function is as follows. Non-catalytic subunit of the V1 complex of vacuolar(H+)-ATPase (V-ATPase), a multisubunit enzyme composed of a peripheral complex (V1) that hydrolyzes ATP and a membrane integral complex (V0) that translocates protons. V-ATPase is responsible for acidifying and maintaining the pH of intracellular compartments and in some cell types, is targeted to the plasma membrane, where it is responsible for acidifying the extracellular environment. Essential for the proper assembly and activity of V-ATPase. This is V-type proton ATPase subunit B (ATP6V1B) from Gallus gallus (Chicken).